Here is a 293-residue protein sequence, read N- to C-terminus: MSQRTESYLVGLVGDGVTPSLTPPMHEREGDVQGLRYLYRPIDLLELGLAGDSVGEVLRSARTLGFNGLNITHPCKQLVLQHLDEVSPDARRLGAVNTVVIRDGRFIGHNTDFSGFAAALASGLPGARLDRVVQLGAGGAGSAVAYALLSAGAKTLDLVDMDAERAAARAEELSGFFPDSTVTARTTADLPQLMPLADGLVHCTPVGMAAHPGVPLDLELLESRHWVADIVYRPIDTELVQGARAKGCDVLDGGRMAVGQAADAFRIFTGLDADPERMRSHFLELVAAEEVAA.

Shikimate is bound by residues 20 to 22 (SLT) and Thr72. Lys76 acts as the Proton acceptor in catalysis. The shikimate site is built by Asn97 and Asp112. NADP(+) contacts are provided by residues 136–140 (GAGGA) and Ile230. Tyr232 contributes to the shikimate binding site. Gly253 provides a ligand contact to NADP(+).

It belongs to the shikimate dehydrogenase family. Homodimer.

The enzyme catalyses shikimate + NADP(+) = 3-dehydroshikimate + NADPH + H(+). It participates in metabolic intermediate biosynthesis; chorismate biosynthesis; chorismate from D-erythrose 4-phosphate and phosphoenolpyruvate: step 4/7. Its function is as follows. Involved in the biosynthesis of the chorismate, which leads to the biosynthesis of aromatic amino acids. Catalyzes the reversible NADPH linked reduction of 3-dehydroshikimate (DHSA) to yield shikimate (SA). The chain is Shikimate dehydrogenase (NADP(+)) from Pseudarthrobacter chlorophenolicus (strain ATCC 700700 / DSM 12829 / CIP 107037 / JCM 12360 / KCTC 9906 / NCIMB 13794 / A6) (Arthrobacter chlorophenolicus).